Reading from the N-terminus, the 418-residue chain is BTB and MATH domain-containing protein 41 (418 aa).

The tract at residues Met1–Ile33 is disordered. The 129-residue stretch at Ser45–Leu173 folds into the MATH domain. Residues Ser232–Tyr293 form the BTB domain.

In terms of assembly, interacts with cul-3.

It functions in the pathway protein modification; protein ubiquitination. Functionally, probable substrate-specific adapter of an E3 ubiquitin-protein ligase complex which mediates the ubiquitination and subsequent proteasomal degradation of target proteins. In Caenorhabditis elegans, this protein is BTB and MATH domain-containing protein 41 (bath-41).